A 289-amino-acid polypeptide reads, in one-letter code: Probable endonuclease 4 (289 aa).

Zn(2+) contacts are provided by His-75, His-115, Glu-153, Asp-187, His-190, His-224, Asp-237, His-239, and Glu-269.

The protein belongs to the AP endonuclease 2 family. The cofactor is Zn(2+).

The catalysed reaction is Endonucleolytic cleavage to 5'-phosphooligonucleotide end-products.. Functionally, endonuclease IV plays a role in DNA repair. It cleaves phosphodiester bonds at apurinic or apyrimidinic (AP) sites, generating a 3'-hydroxyl group and a 5'-terminal sugar phosphate. This chain is Probable endonuclease 4, found in Chlamydia abortus (strain DSM 27085 / S26/3) (Chlamydophila abortus).